The chain runs to 178 residues: uncharacterized protein (178 aa).

To E.coli YrdD.

This is an uncharacterized protein from Haemophilus influenzae (strain ATCC 51907 / DSM 11121 / KW20 / Rd).